The chain runs to 230 residues: Ion-translocating oxidoreductase complex subunit E (230 aa).

The next 6 membrane-spanning stretches (helical) occupy residues 18–38, 39–59, 63–83, 86–106, 125–145, and 182–202; these read ALVQ…ATNA, LGLG…VSAL, TPAE…VSAV, LINA…PLIV, WLSA…MFVL, and PFLL…MLAV.

This sequence belongs to the NqrDE/RnfAE family. In terms of assembly, the complex is composed of six subunits: RsxA, RsxB, RsxC, RsxD, RsxE and RsxG.

The protein resides in the cell inner membrane. Functionally, part of a membrane-bound complex that couples electron transfer with translocation of ions across the membrane. Required to maintain the reduced state of SoxR. This is Ion-translocating oxidoreductase complex subunit E from Salmonella agona (strain SL483).